The sequence spans 344 residues: L-rhamnose-proton symporter (344 aa).

Helical transmembrane passes span 4-24, 38-58, 68-88, 101-121, 137-157, 175-195, 214-234, 259-279, 290-310, and 323-343; these read AITMGIFWHLIGAASAACFYA, WSVGGIVSWIILPWAISALLL, FSLSTLLPVFLFGAMWGIGNI, MGIGIAIGITLIVGTLMTPII, TLLGVLVALIGVGIVTRAGQL, LVLAVMCGIFSAGMSFAMNAA, LPSYVVIMGGGAIINLGFCFI, VLLSALGGLMWYLQFFFYAWG, ISWMLHMSFYVLCGGIVGLVL, and VLSLGCVVIIVAANIVGIGMA.

Belongs to the L-rhamnose transporter (TC 2.A.7.6) family.

It localises to the cell inner membrane. The catalysed reaction is L-rhamnopyranose(in) + H(+)(in) = L-rhamnopyranose(out) + H(+)(out). Uptake of L-rhamnose across the cytoplasmic membrane with the concomitant transport of protons into the cell (symport system). The chain is L-rhamnose-proton symporter from Shigella dysenteriae serotype 1 (strain Sd197).